Consider the following 264-residue polypeptide: Thiazole synthase (264 aa).

Lys-106 (schiff-base intermediate with DXP) is an active-site residue. 1-deoxy-D-xylulose 5-phosphate contacts are provided by residues Gly-167, 193-194, and 215-216; these read AG and NS.

The protein belongs to the ThiG family. As to quaternary structure, homotetramer. Forms heterodimers with either ThiH or ThiS.

It localises to the cytoplasm. The catalysed reaction is [ThiS sulfur-carrier protein]-C-terminal-Gly-aminoethanethioate + 2-iminoacetate + 1-deoxy-D-xylulose 5-phosphate = [ThiS sulfur-carrier protein]-C-terminal Gly-Gly + 2-[(2R,5Z)-2-carboxy-4-methylthiazol-5(2H)-ylidene]ethyl phosphate + 2 H2O + H(+). Its pathway is cofactor biosynthesis; thiamine diphosphate biosynthesis. Functionally, catalyzes the rearrangement of 1-deoxy-D-xylulose 5-phosphate (DXP) to produce the thiazole phosphate moiety of thiamine. Sulfur is provided by the thiocarboxylate moiety of the carrier protein ThiS. In vitro, sulfur can be provided by H(2)S. This chain is Thiazole synthase, found in Prochlorococcus marinus (strain AS9601).